The chain runs to 271 residues: Probable diacyglycerol O-acyltransferase tgs3 (271 aa).

Belongs to the long-chain O-acyltransferase family.

The enzyme catalyses an acyl-CoA + a 1,2-diacyl-sn-glycerol = a triacyl-sn-glycerol + CoA. Its pathway is glycerolipid metabolism; triacylglycerol biosynthesis. In terms of biological role, catalyzes the terminal and only committed step in triacylglycerol synthesis by using diacylglycerol and fatty acyl CoA as substrates. Required for storage lipid synthesis. This chain is Probable diacyglycerol O-acyltransferase tgs3 (tgs3), found in Mycobacterium tuberculosis (strain CDC 1551 / Oshkosh).